The sequence spans 160 residues: Putative NrdI-like protein (160 aa).

It belongs to the NrdI family.

This is Putative NrdI-like protein from Streptococcus pyogenes serotype M6 (strain ATCC BAA-946 / MGAS10394).